Consider the following 205-residue polypeptide: Ribosomal RNA large subunit methyltransferase E (205 aa).

S-adenosyl-L-methionine is bound by residues glycine 50, tryptophan 52, aspartate 67, asparagine 83, and aspartate 111. Lysine 151 acts as the Proton acceptor in catalysis.

Belongs to the class I-like SAM-binding methyltransferase superfamily. RNA methyltransferase RlmE family.

The protein localises to the cytoplasm. The enzyme catalyses uridine(2552) in 23S rRNA + S-adenosyl-L-methionine = 2'-O-methyluridine(2552) in 23S rRNA + S-adenosyl-L-homocysteine + H(+). In terms of biological role, specifically methylates the uridine in position 2552 of 23S rRNA at the 2'-O position of the ribose in the fully assembled 50S ribosomal subunit. The sequence is that of Ribosomal RNA large subunit methyltransferase E from Thermoplasma acidophilum (strain ATCC 25905 / DSM 1728 / JCM 9062 / NBRC 15155 / AMRC-C165).